The chain runs to 208 residues: High frequency lysogenization protein HflD homolog (208 aa).

The protein belongs to the HflD family.

Its subcellular location is the cytoplasm. It localises to the cell inner membrane. This chain is High frequency lysogenization protein HflD homolog, found in Pseudomonas putida (strain ATCC 700007 / DSM 6899 / JCM 31910 / BCRC 17059 / LMG 24140 / F1).